We begin with the raw amino-acid sequence, 172 residues long: Co-chaperone protein HscB homolog (172 aa).

The J domain maps to 2–69; the sequence is NHFELFNLPV…DSRAAYLLAL (68 aa).

This sequence belongs to the HscB family. Interacts with HscA and stimulates its ATPase activity.

Co-chaperone involved in the maturation of iron-sulfur cluster-containing proteins. Seems to help targeting proteins to be folded toward HscA. This Acinetobacter baumannii (strain AB307-0294) protein is Co-chaperone protein HscB homolog.